The chain runs to 177 residues: Alkyl hydroperoxide reductase AhpD (177 aa).

Cys133 functions as the Proton donor in the catalytic mechanism. A disulfide bond links Cys133 and Cys136. Cys136 functions as the Cysteine sulfenic acid (-SOH) intermediate in the catalytic mechanism.

It belongs to the AhpD family.

It catalyses the reaction N(6)-[(R)-dihydrolipoyl]-L-lysyl-[lipoyl-carrier protein] + a hydroperoxide = N(6)-[(R)-lipoyl]-L-lysyl-[lipoyl-carrier protein] + an alcohol + H2O. Antioxidant protein with alkyl hydroperoxidase activity. Required for the reduction of the AhpC active site cysteine residues and for the regeneration of the AhpC enzyme activity. This Coxiella burnetii (strain CbuG_Q212) (Coxiella burnetii (strain Q212)) protein is Alkyl hydroperoxide reductase AhpD.